Reading from the N-terminus, the 116-residue chain is Ribosome-binding factor A (116 aa).

This sequence belongs to the RbfA family. Monomer. Binds 30S ribosomal subunits, but not 50S ribosomal subunits or 70S ribosomes.

The protein resides in the cytoplasm. Its function is as follows. One of several proteins that assist in the late maturation steps of the functional core of the 30S ribosomal subunit. Associates with free 30S ribosomal subunits (but not with 30S subunits that are part of 70S ribosomes or polysomes). Required for efficient processing of 16S rRNA. May interact with the 5'-terminal helix region of 16S rRNA. This is Ribosome-binding factor A from Ureaplasma urealyticum serovar 10 (strain ATCC 33699 / Western).